Here is a 338-residue protein sequence, read N- to C-terminus: Formamidase (338 aa).

The 247-residue stretch at 14–260 (LLIAAIQYPV…WEIVTAELFP (247 aa)) folds into the CN hydrolase domain. Glu60 (proton acceptor) is an active-site residue. Lys133 serves as the catalytic Proton donor. Cys166 (nucleophile) is an active-site residue.

It belongs to the carbon-nitrogen hydrolase superfamily. Aliphatic amidase family.

It catalyses the reaction formamide + H2O = formate + NH4(+). Is an aliphatic amidase with a restricted substrate specificity, as it only hydrolyzes formamide. The protein is Formamidase of Photorhabdus laumondii subsp. laumondii (strain DSM 15139 / CIP 105565 / TT01) (Photorhabdus luminescens subsp. laumondii).